A 161-amino-acid chain; its full sequence is Respiratory growth induced protein 1 (161 aa).

Residue Lys-68 forms a Glycyl lysine isopeptide (Lys-Gly) (interchain with G-Cter in ubiquitin) linkage.

It belongs to the RGI1 family.

The protein localises to the cell membrane. Functionally, involved in the control of energetic metabolism and significantly contribute to cell fitness, especially under respiratory growth conditions. This chain is Respiratory growth induced protein 1 (RGI1), found in Saccharomyces cerevisiae (strain RM11-1a) (Baker's yeast).